Reading from the N-terminus, the 972-residue chain is Multiple C2 domain and transmembrane region protein 8 (972 aa).

Residues 1 to 107 enclose the C2 1 domain; the sequence is MMSNLKLGVE…PYSEAVGLPY (107 aa). Residues 142 to 203 are disordered; sequence PNLISTKKIP…MMESSLYQAP (62 aa). A compositionally biased stretch (basic residues) spans 150–159; that stretch reads IPSKSRHKFH. Residues 161–173 are compositionally biased toward polar residues; it reads IPTNESNHSPRGN. Over residues 179-194 the composition is skewed to pro residues; the sequence is PQPPPPQSQTALPPPM. C2 domains are found at residues 232-352, 384-507, and 543-669; these read GGGK…PEWY, ALNA…NRWF, and YSSD…SHSY. Ca(2+) is bound by residues D265, D271, D318, D320, and D325. The next 2 membrane-spanning stretches (helical) occupy residues 803-823 and 924-944; these read IIFL…SLCL and TVVL…LYIM.

This sequence belongs to the MCTP family. Ca(2+) serves as cofactor. Expressed in root hairs.

It localises to the membrane. It is found in the vesicle. In terms of biological role, may function as a signaling molecule by regulating the trafficking of other regulators. The protein is Multiple C2 domain and transmembrane region protein 8 of Arabidopsis thaliana (Mouse-ear cress).